The chain runs to 633 residues: MFRSGERPLGGLAVPAEQRDFLPLETTNNNNNHHQPAAWARRASAGPSASPVPSAPSSPRPAAALPASESTDPASGSSNKRKRDNKASTYGLNYSLLQPSGGRAAGGGRADGGGGVYSGTPWKRRNYNQGVVGLHEEISDFYEYMSPRPEEEKMRMEVVSRIESVIKELWPSADVQIFGSFKTGLYLPTSDIDLVVFGKWENLPLWTLEEALRKHKVADEDSVKVLDKATVPIIKLTDSFTEVKVDISFNVQNGVRAADLIKDFTKKYPVLPYLVLVLKQFLLQRDLNEVFTGGIGSYSLFLMAVSFLQLHPREDACIPNTNYGVLLIEFFELYGRHFNYLKTGIRIKDGGSYVAKDEVQKNMLDGYRPSMLYIEDPLQPGNDVGRSSYGAMQVKQAFDYAYVVLSHAVSPIAKYYPNNETESILGRIIRVTDEVATYRDWISKQWGLQNRPEPSCNGNGVTLIVDTQQLDKCNNNLSEEKEALGKCRSNASEPLSKHSSNSSSGPVSSSSATQSSSSDVDSDATPCKTPKQLLCRPPTVTRVGSQDVSLEVSQAVGKMQSTQTTNTPNNANKSQHGSARLFRSSSKGFQGTAQTSHGALMTSKQHQGKSNTQYYHGKKRRHKRDAPLSELCR.

A disordered region spans residues 1 to 115; that stretch reads MFRSGERPLG…GGGRADGGGG (115 aa). Over residues 25-34 the composition is skewed to polar residues; it reads ETTNNNNNHH. Low complexity-rich tracts occupy residues 36 to 52 and 60 to 70; these read PAAW…ASPV and RPAAALPASES. Over residues 87 to 98 the composition is skewed to polar residues; that stretch reads ASTYGLNYSLLQ. Gly residues predominate over residues 103–115; sequence RAAGGGRADGGGG. Residues Asp-191 and Asp-193 each coordinate Mg(2+). 6 residues coordinate ATP: Gly-254, Lys-279, Ser-297, Tyr-298, Asn-382, and Arg-386. A PAP-associated domain is found at 322–382; sequence NYGVLLIEFF…YIEDPLQPGN (61 aa). The interval 484-633 is disordered; the sequence is LGKCRSNASE…RDAPLSELCR (150 aa). Residues 492 to 519 are compositionally biased toward low complexity; the sequence is SEPLSKHSSNSSSGPVSSSSATQSSSSD. Lys-531 participates in a covalent cross-link: Glycyl lysine isopeptide (Lys-Gly) (interchain with G-Cter in SUMO2). The segment covering 542-552 has biased composition (polar residues); sequence RVGSQDVSLEV. Residue Ser-545 is modified to Phosphoserine. Residues Lys-558, Lys-573, and Lys-587 each participate in a glycyl lysine isopeptide (Lys-Gly) (interchain with G-Cter in SUMO2) cross-link. Polar residues predominate over residues 559–614; it reads MQSTQTTNTPNNANKSQHGSARLFRSSSKGFQGTAQTSHGALMTSKQHQGKSNTQY. The Basic, involved in binding of the RNA primer motif lies at 618 to 624; sequence KKRRHKR.

This sequence belongs to the DNA polymerase type-B-like family. As to quaternary structure, component of a nucleolar TRAMP-like complex, an ATP-dependent exosome regulatory complex consisting of a helicase (MTREX), an oligadenylate polymerase (TENT4B or TENT4A), and a substrate specific RNA-binding factor (ZCCHC7 or ZCCHC8). Several TRAMP-like complexes exist with specific compositions and are associated with nuclear, or nucleolar RNA exosomes. Mg(2+) is required as a cofactor. It depends on Mn(2+) as a cofactor.

The protein localises to the nucleus. It localises to the nucleolus. Its subcellular location is the cytoplasm. The catalysed reaction is RNA(n) + ATP = RNA(n)-3'-adenine ribonucleotide + diphosphate. Its function is as follows. Terminal nucleotidyltransferase that catalyzes preferentially the transfer of ATP and GTP on RNA 3' poly(A) tail creating a heterogeneous 3' poly(A) tail leading to mRNAs stabilization by protecting mRNAs from active deadenylation. Also functions as a catalytic subunit of a TRAMP-like complex which has a poly(A) RNA polymerase activity and is involved in a post-transcriptional quality control mechanism. Polyadenylation with short oligo(A) tails is required for the degradative activity of the exosome on several of its nuclear RNA substrates. Doesn't need a cofactor for polyadenylation activity (in vitro). Plays a role in replication-dependent histone mRNA degradation, probably through terminal uridylation of mature histone mRNAs. May play a role in sister chromatid cohesion. This is Terminal nucleotidyltransferase 4B from Mus musculus (Mouse).